The following is a 183-amino-acid chain: D-glycero-alpha-D-manno-heptose-1,7-bisphosphate 7-phosphatase (183 aa).

Zn(2+) is bound by residues C93, H95, C108, and C110.

Belongs to the GmhB family.

It localises to the cytoplasm. It catalyses the reaction D-glycero-alpha-D-manno-heptose 1,7-bisphosphate + H2O = D-glycero-alpha-D-manno-heptose 1-phosphate + phosphate. It participates in nucleotide-sugar biosynthesis; GDP-D-glycero-alpha-D-manno-heptose biosynthesis; GDP-D-glycero-alpha-D-manno-heptose from D-glycero-alpha-D-manno-heptose 7-phosphate: step 2/3. In terms of biological role, converts the D-glycero-alpha-D-manno-heptose 1,7-bisphosphate intermediate into D-glycero-alpha-D-manno-heptose 1-phosphate by removing the phosphate group at the C-7 position. The chain is D-glycero-alpha-D-manno-heptose-1,7-bisphosphate 7-phosphatase (gmhB2) from Photorhabdus laumondii subsp. laumondii (strain DSM 15139 / CIP 105565 / TT01) (Photorhabdus luminescens subsp. laumondii).